Consider the following 119-residue polypeptide: Dolichyl-diphosphooligosaccharide--protein glycosyltransferase subunit DAD1 (119 aa).

Ser-2 carries the post-translational modification N-acetylserine. Topologically, residues 2–30 are cytoplasmic; it reads SASVASVISRFLEEYLSSTPQRLKLLDAY. A helical membrane pass occupies residues 31-51; the sequence is LLYILLTGALQFGYCLLVGTF. At 52-54 the chain is on the lumenal side; it reads PFN. The helical transmembrane segment at 55–75 threads the bilayer; the sequence is SFLSGFISCVGSFILAGNGSL. The Cytoplasmic segment spans residues 76-81; it reads RNRSNN. Residues 82–98 form a helical membrane-spanning segment; sequence VFTLVRCFSSLVTLFYS. Over 99–119 the chain is Lumenal; that stretch reads RSPPREVPRGACIALFCERGN.

It belongs to the DAD/OST2 family. In terms of assembly, component of the oligosaccharyltransferase (OST) complex. OST exists in two different complex forms which contain common core subunits RPN1, RPN2, OST48, OST4, DAD1 and TMEM258, either STT3A or STT3B as catalytic subunits, and form-specific accessory subunits. STT3A complex assembly occurs through the formation of 3 subcomplexes. Subcomplex 1 contains RPN1 and TMEM258, subcomplex 2 contains the STT3A-specific subunits STT3A, DC2/OSTC, and KCP2 as well as the core subunit OST4, and subcomplex 3 contains RPN2, DAD1, and OST48. The STT3A complex can form stable complexes with the Sec61 complex or with both the Sec61 and TRAP complexes.

It is found in the endoplasmic reticulum membrane. The protein operates within protein modification; protein glycosylation. Its function is as follows. Subunit of the oligosaccharyl transferase (OST) complex that catalyzes the initial transfer of a defined glycan (Glc(3)Man(9)GlcNAc(2) in eukaryotes) from the lipid carrier dolichol-pyrophosphate to an asparagine residue within an Asn-X-Ser/Thr consensus motif in nascent polypeptide chains, the first step in protein N-glycosylation. N-glycosylation occurs cotranslationally and the complex associates with the Sec61 complex at the channel-forming translocon complex that mediates protein translocation across the endoplasmic reticulum (ER). All subunits are required for a maximal enzyme activity. The sequence is that of Dolichyl-diphosphooligosaccharide--protein glycosyltransferase subunit DAD1 from Canis lupus familiaris (Dog).